We begin with the raw amino-acid sequence, 246 residues long: Chanoclavine-I dehydrogenase easD (246 aa).

The signal sequence occupies residues 1 to 20; the sequence is MASVSSKIFAITGGASGIGA. I18, D66, R132, Y169, and K173 together coordinate NADP(+). Y169 functions as the Proton donor in the catalytic mechanism. K173 functions as the Lowers pKa of active site Tyr in the catalytic mechanism.

Belongs to the short-chain dehydrogenases/reductases (SDR) family. In terms of assembly, homotetramer.

The catalysed reaction is chanoclavine-I + NAD(+) = chanoclavine-I aldehyde + NADH + H(+). It participates in alkaloid biosynthesis; ergot alkaloid biosynthesis. Chanoclavine-I dehydrogenase; part of the gene cluster that mediates the biosynthesis of fungal ergot alkaloid. DmaW catalyzes the first step of ergot alkaloid biosynthesis by condensing dimethylallyl diphosphate (DMAP) and tryptophan to form 4-dimethylallyl-L-tryptophan. The second step is catalyzed by the methyltransferase easF that methylates 4-dimethylallyl-L-tryptophan in the presence of S-adenosyl-L-methionine, resulting in the formation of 4-dimethylallyl-L-abrine. The catalase easC and the FAD-dependent oxidoreductase easE then transform 4-dimethylallyl-L-abrine to chanoclavine-I which is further oxidized by easD in the presence of NAD(+), resulting in the formation of chanoclavine-I aldehyde. Chanoclavine-I aldehyde is the precursor of ergoamides and ergopeptines in Clavicipitaceae, and clavine-type alcaloids such as fumiclavine in Trichocomaceae. However, the metabolites downstream of chanoclavine-I aldehyde in Arthrodermataceae have not been identified yet. The protein is Chanoclavine-I dehydrogenase easD of Arthroderma benhamiae (strain ATCC MYA-4681 / CBS 112371) (Trichophyton mentagrophytes).